We begin with the raw amino-acid sequence, 78 residues long: Acyl carrier protein (78 aa).

The Carrier domain maps to 4-78 (AEIKDKVYDI…QQAIDYIVKK (75 aa)). At S39 the chain carries O-(pantetheine 4'-phosphoryl)serine.

Belongs to the acyl carrier protein (ACP) family. 4'-phosphopantetheine is transferred from CoA to a specific serine of apo-ACP by AcpS. This modification is essential for activity because fatty acids are bound in thioester linkage to the sulfhydryl of the prosthetic group.

It localises to the cytoplasm. It participates in lipid metabolism; fatty acid biosynthesis. Functionally, carrier of the growing fatty acid chain in fatty acid biosynthesis. In Chlorobium phaeovibrioides (strain DSM 265 / 1930) (Prosthecochloris vibrioformis (strain DSM 265)), this protein is Acyl carrier protein.